The sequence spans 462 residues: Light-independent protochlorophyllide reductase subunit N (462 aa).

Residues Cys24, Cys49, and Cys109 each coordinate [4Fe-4S] cluster.

It belongs to the BchN/ChlN family. Protochlorophyllide reductase is composed of three subunits; ChlL, ChlN and ChlB. Forms a heterotetramer of two ChlB and two ChlN subunits. The cofactor is [4Fe-4S] cluster.

The protein localises to the plastid. It localises to the chloroplast. The enzyme catalyses chlorophyllide a + oxidized 2[4Fe-4S]-[ferredoxin] + 2 ADP + 2 phosphate = protochlorophyllide a + reduced 2[4Fe-4S]-[ferredoxin] + 2 ATP + 2 H2O. It participates in porphyrin-containing compound metabolism; chlorophyll biosynthesis (light-independent). Functionally, component of the dark-operative protochlorophyllide reductase (DPOR) that uses Mg-ATP and reduced ferredoxin to reduce ring D of protochlorophyllide (Pchlide) to form chlorophyllide a (Chlide). This reaction is light-independent. The NB-protein (ChlN-ChlB) is the catalytic component of the complex. The polypeptide is Light-independent protochlorophyllide reductase subunit N (Pleurastrum terricola (Filamentous green alga)).